A 1048-amino-acid chain; its full sequence is Integrin alpha-V (1048 aa).

The first 30 residues, 1 to 30, serve as a signal peptide directing secretion; it reads MAFPPRRRLRLGPRGLPLLLSGLLLPLCRA. The Extracellular portion of the chain corresponds to 31–992; it reads FNLDVESPAE…WGIQPAPMPV (962 aa). FG-GAP repeat units lie at residues 32–98, 109–170, 173–225, 237–291, 292–357, 358–415, and 419–482; these read NLDV…RRCQ, DYAK…VEYA, RSKN…VSKY, QLAT…GKNM, SSLH…GDFQ, TIKL…GLNA, and QILE…VYPS. N-linked (GlcNAc...) asparagine glycosylation is present at Asn74. Disulfide bonds link Cys89-Cys97, Cys138-Cys158, and Cys172-Cys185. Residues Asp260, Asn262, Asp264, Ile266, and Asp268 each coordinate Ca(2+). Residues Asn290 and Asn296 are each glycosylated (N-linked (GlcNAc...) asparagine). Ca(2+)-binding residues include Asp314, Asn316, Asp318, Tyr320, Asp322, Asp379, Asp381, Asp383, Phe385, Asp387, Asp443, Asp445, Asn447, Tyr449, and Asp451. Residue Asn488 is glycosylated (N-linked (GlcNAc...) asparagine). 2 disulfides stabilise this stretch: Cys491–Cys502 and Cys508–Cys565. 2 N-linked (GlcNAc...) asparagine glycosylation sites follow: Asn554 and Asn615. Disulfide bonds link Cys626-Cys632 and Cys698-Cys711. 4 N-linked (GlcNAc...) asparagine glycosylation sites follow: Asn704, Asn835, Asn851, and Asn874. 2 disulfides stabilise this stretch: Cys852/Cys914 and Cys904/Cys909. N-linked (GlcNAc...) asparagine glycans are attached at residues Asn945, Asn973, and Asn980. The chain crosses the membrane as a helical span at residues 993–1016; it reads PVWVIILAVLAGLLLLAVLVFVMY. Over 1017–1048 the chain is Cytoplasmic; the sequence is RMGFFKRVRPPQEEQEREQLQPHENGEGNSET. The short motif at 1019–1023 is the GFFKR motif element; it reads GFFKR. The segment covering 1027–1042 has biased composition (basic and acidic residues); the sequence is PQEEQEREQLQPHENG. Positions 1027-1048 are disordered; it reads PQEEQEREQLQPHENGEGNSET.

Belongs to the integrin alpha chain family. As to quaternary structure, heterodimer of an alpha and a beta subunit. The alpha subunit is composed of a heavy and a light chain linked by a disulfide bond. Alpha-V (ITGAV) associates with either beta-1 (ITGB1), beta-3 (ITGB3), beta-5 (ITGB5), beta-6 (ITGB6) or beta-8 (ITGB8). Interacts with RAB25. Interacts with CIB1. Integrins ITGAV:ITGB3 and ITGAV:ITGB5 interact with FBLN5 (via N-terminus). ITGAV:ITGB3 and ITGAV:ITGB5 interact with CCN3. ITGAV:ITGB3 interacts with ADGRA2. ITGAV:ITGB3 interacts with FGF2; it is likely that FGF2 can simultaneously bind ITGAV:ITGB3 and FGF receptors. ITGAV:ITGB3 interacts with SELP (via C-type lectin domain); the interaction mediates cell-cell interaction and adhesion. ITGAV:ITGB3 is found in a ternary complex with CX3CR1 and CX3CL1. ITGAV:ITGB3 is found in a ternary complex with NRG1 and ERBB3. ITGAV:ITGB3 is found in a ternary complex with FGF1 and FGFR1. ITGAV:ITGB3 is found in a ternary complex with IGF1 and IGF1R. ITGAV:ITGB3 interacts with IGF2. ITGAV:ITGB3 and ITGAV:ITGB6 interact with FBN1. ITGAV:ITGB3 interacts with CD9, CD81 and CD151 (via second extracellular domain). ITGAV:ITGB6 interacts with TGFB1. ITGAV:ITGB3 interacts with PTN. Forms a complex with PTPRZ1 and PTN that stimulates endothelial cell migration through ITGB3 'Tyr-773' phosphorylation. Interacts with TM4SF19. (Microbial infection) Alpha-V/beta-6 and alpha-V/beta-3 bind to foot-and-mouth disease virus (FMDV) VP1 protein and acts as a receptor for this virus.

Its subcellular location is the cell membrane. It localises to the cell junction. It is found in the focal adhesion. The alpha-V (ITGAV) integrins are receptors for vitronectin, cytotactin, fibronectin, fibrinogen, laminin, matrix metalloproteinase-2, osteopontin, osteomodulin, prothrombin, thrombospondin, TGFB1 and vWF. They recognize the sequence R-G-D in a wide array of ligands. Alpha-V integrins may play a role in embryo implantation, angiogenesis and wound healing. ITGAV:ITGB3 binds to fractalkine (CX3CL1) and may act as its coreceptor in CX3CR1-dependent fractalkine signaling. ITGAV:ITGB3 binds to NRG1 (via EGF domain) and this binding is essential for NRG1-ERBB signaling. ITGAV:ITGB3 binds to FGF1 and this binding is essential for FGF1 signaling. ITGAV:ITGB3 binds to FGF2 and this binding is essential for FGF2 signaling. ITGAV:ITGB3 binds to IGF1 and this binding is essential for IGF1 signaling. ITGAV:ITGB3 binds to IGF2 and this binding is essential for IGF2 signaling. ITGAV:ITGB3 binds to IL1B and this binding is essential for IL1B signaling. ITGAV:ITGB3 binds to PLA2G2A via a site (site 2) which is distinct from the classical ligand-binding site (site 1) and this induces integrin conformational changes and enhanced ligand binding to site 1. ITGAV:ITGB3 and ITGAV:ITGB6 act as receptors for fibrillin-1 (FBN1) and mediate R-G-D-dependent cell adhesion to FBN1. Integrin alpha-V/beta-6 or alpha-V/beta-8 (ITGAV:ITGB6 or ITGAV:ITGB8) mediates R-G-D-dependent release of transforming growth factor beta-1 (TGF-beta-1) from regulatory Latency-associated peptide (LAP), thereby playing a key role in TGF-beta-1 activation. ITGAV:ITGB3 acts as a receptor for CD40LG. ITGAV:ITGB3 acts as a receptor for IBSP and promotes cell adhesion and migration to IBSP. The sequence is that of Integrin alpha-V (ITGAV) from Bos taurus (Bovine).